A 470-amino-acid polypeptide reads, in one-letter code: Nuclear receptor subfamily 0 group B member 1 (470 aa).

Repeat copies occupy residues 1 to 67 (MAGE…YRCC), 68 to 133 (FCGK…YRCC), and 134 to 200 (FCGE…YRCC). Positions 1–253 (MAGENHQWQG…RPVALKNPQV (253 aa)) are 4 X 67 AA tandem repeats. 3 short sequence motifs (LXXLL motif) span residues 13–17 (LYNML), 80–84 (LYSML), and 146–150 (LYSLL). The 4; truncated repeat unit spans residues 201–253 (FCGEDHPQQGSTLYCMPTSTNQAQAAPEERPRAPWWDASSGALRPVALKNPQV). Positions 215–469 (CMPTSTNQAQ…DMMLEMLCTK (255 aa)) constitute an NR LBD domain. The short motif at 461–466 (MMLEML) is the AF-2 motif element.

Belongs to the nuclear hormone receptor family. NR0 subfamily. In terms of assembly, homodimer. Interacts with NR5A1, NR5A2, NR0B2 and with COPS2. Interacts with ESRRB; represses ESRRB activity at the GATA6 promoter.

The protein localises to the nucleus. The protein resides in the cytoplasm. Its function is as follows. Nuclear receptor that lacks a DNA-binding domain and acts as a corepressor that inhibits the transcriptional activity of other nuclear receptors through heterodimeric interactions. Component of a cascade required for the development of the hypothalamic-pituitary-adrenal-gonadal axis. May also have a role in the development of the embryo and in the maintenance of embryonic stem cell pluripotency. The sequence is that of Nuclear receptor subfamily 0 group B member 1 (NR0B1) from Pongo pygmaeus (Bornean orangutan).